A 732-amino-acid chain; its full sequence is Formin-homology and zinc finger domains protein 1 (732 aa).

Composition is skewed to low complexity over residues 1–12 (MMLASSAPTAPS), 19–45 (QPSAATTRADDCSSSTSPTNTSASDAS), 121–137 (QQQQQQNQNPSQSQSSS), and 240–251 (SSPKSPTSPTQP). An N-terminal signal peptide occupies residues 1 to 27 (MMLASSAPTAPSLLPPSSQPSAATTRA). 3 disordered regions span residues 1 to 45 (MMLA…SDAS), 121 to 141 (QQQQQQNQNPSQSQSSSSDRK), and 232 to 267 (RGRPMQGRSSPKSPTSPTQPGRRGSQASSLPSRRNT). Residues 256–267 (SQASSLPSRRNT) are compositionally biased toward polar residues. Positions 355–732 (PISLSSSIIP…DDHHINVSSP (378 aa)) constitute an FH2 domain.

It belongs to the formin homology family. In terms of tissue distribution, transiently expressed in all mesoderm derived progenitor body wall muscle cells before they differentiate.

Acts redundantly with hlh-1 to promote body wall muscle cell and coelomocyte specification in postembryonic mesoderm progenitors, probably through suppression of sem-2. In Caenorhabditis elegans, this protein is Formin-homology and zinc finger domains protein 1.